Consider the following 203-residue polypeptide: Proteasome subunit beta 2 (203 aa).

Residues M1–A9 constitute a propeptide, removed in mature form; by autocatalysis. T10 acts as the Nucleophile in catalysis.

The protein belongs to the peptidase T1B family. As to quaternary structure, the 20S proteasome core is composed of 14 alpha and 14 beta subunits that assemble into four stacked heptameric rings, resulting in a barrel-shaped structure. The two inner rings, each composed of seven catalytic beta subunits, are sandwiched by two outer rings, each composed of seven alpha subunits. The catalytic chamber with the active sites is on the inside of the barrel. Has a gated structure, the ends of the cylinder being occluded by the N-termini of the alpha-subunits. Is capped at one or both ends by the proteasome regulatory ATPase, PAN.

It localises to the cytoplasm. The enzyme catalyses Cleavage of peptide bonds with very broad specificity.. The formation of the proteasomal ATPase PAN-20S proteasome complex, via the docking of the C-termini of PAN into the intersubunit pockets in the alpha-rings, triggers opening of the gate for substrate entry. Interconversion between the open-gate and close-gate conformations leads to a dynamic regulation of the 20S proteasome proteolysis activity. In terms of biological role, component of the proteasome core, a large protease complex with broad specificity involved in protein degradation. This Pyrobaculum calidifontis (strain DSM 21063 / JCM 11548 / VA1) protein is Proteasome subunit beta 2.